Consider the following 402-residue polypeptide: Flavohemoprotein (402 aa).

The Globin domain occupies 1–136 (MLSAKTIEIV…IADAFISIEA (136 aa)). Position 85 (His-85) interacts with heme b. Catalysis depends on charge relay system residues Tyr-95 and Glu-135. A reductase region spans residues 147–402 (GGWKDFRNFV…EFFGPATSLQ (256 aa)). An FAD-binding FR-type domain is found at 150-260 (KDFRNFVIVK…SAPAGDFVLN (111 aa)). Residues Tyr-188 and 204-207 (RQYS) each bind FAD. 273-278 (GVGITP) contacts NADP(+). 394 to 397 (FFGP) serves as a coordination point for FAD.

It belongs to the globin family. Two-domain flavohemoproteins subfamily. This sequence in the C-terminal section; belongs to the flavoprotein pyridine nucleotide cytochrome reductase family. Heme b is required as a cofactor. Requires FAD as cofactor.

It carries out the reaction 2 nitric oxide + NADPH + 2 O2 = 2 nitrate + NADP(+) + H(+). It catalyses the reaction 2 nitric oxide + NADH + 2 O2 = 2 nitrate + NAD(+) + H(+). In terms of biological role, is involved in NO detoxification in an aerobic process, termed nitric oxide dioxygenase (NOD) reaction that utilizes O(2) and NAD(P)H to convert NO to nitrate, which protects the bacterium from various noxious nitrogen compounds. Therefore, plays a central role in the inducible response to nitrosative stress. This chain is Flavohemoprotein, found in Bacillus cereus (strain ATCC 14579 / DSM 31 / CCUG 7414 / JCM 2152 / NBRC 15305 / NCIMB 9373 / NCTC 2599 / NRRL B-3711).